The chain runs to 375 residues: Erythronate-4-phosphate dehydrogenase (375 aa).

The substrate site is built by Ser-45 and Thr-67. NAD(+) is bound at residue Asp-147. The active site involves Arg-209. Asp-233 contacts NAD(+). Glu-238 is an active-site residue. The active-site Proton donor is His-255. An NAD(+)-binding site is contributed by Gly-258. A substrate-binding site is contributed by Tyr-259.

This sequence belongs to the D-isomer specific 2-hydroxyacid dehydrogenase family. PdxB subfamily. As to quaternary structure, homodimer.

The protein localises to the cytoplasm. The enzyme catalyses 4-phospho-D-erythronate + NAD(+) = (R)-3-hydroxy-2-oxo-4-phosphooxybutanoate + NADH + H(+). It functions in the pathway cofactor biosynthesis; pyridoxine 5'-phosphate biosynthesis; pyridoxine 5'-phosphate from D-erythrose 4-phosphate: step 2/5. In terms of biological role, catalyzes the oxidation of erythronate-4-phosphate to 3-hydroxy-2-oxo-4-phosphonooxybutanoate. The polypeptide is Erythronate-4-phosphate dehydrogenase (Shewanella amazonensis (strain ATCC BAA-1098 / SB2B)).